Consider the following 62-residue polypeptide: Photosystem II reaction center X protein (62 aa).

A helical membrane pass occupies residues 26–46 (IASFFAAALLIVIPAAAFLIF).

The protein belongs to the PsbX family. Type 2 subfamily. In terms of assembly, PSII consists of a core antenna complex that captures photons, and an electron transfer chain that converts photonic excitation into a charge separation. PSII forms dimeric complexes.

Its subcellular location is the cellular thylakoid membrane. Its function is as follows. Involved in the binding and/or turnover of quinones at the Q(B) site of Photosystem II. The protein is Photosystem II reaction center X protein of Prochlorococcus marinus subsp. pastoris (strain CCMP1986 / NIES-2087 / MED4).